Reading from the N-terminus, the 568-residue chain is PWWP domain-containing protein2 (568 aa).

The segment covering 1-19 (MTEIKDSSVKDENPGKQEE) has biased composition (basic and acidic residues). Disordered stretches follow at residues 1–126 (MTEI…YKPG), 213–340 (QSTP…DVAK), and 465–568 (IASL…TGQK). Residues 29 to 46 (MSTATNNSKNIETTSSNG) are compositionally biased toward polar residues. Composition is skewed to basic and acidic residues over residues 48-88 (EDIK…KTIE) and 100-122 (KSQKSEKSNGNARKETKQSERVN). Residues 125–189 (PGMRVLTKMS…SDSLTPLTSE (65 aa)) enclose the PWWP domain. Low complexity predominate over residues 214–228 (STPDLDSLSVPSSES). Over residues 229–249 (EVSEEESDQEMSEPSPIEEDY) the composition is skewed to acidic residues. Positions 255-266 (RRITRKGTKKKT) are enriched in basic residues. The span at 281–292 (LNASSNVSSNPA) shows a compositional bias: polar residues. A compositionally biased stretch (acidic residues) spans 325–336 (KEEEEGSVANEE). Basic and acidic residues-rich tracts occupy residues 489–500 (KQNEDNEDKVKA) and 514–541 (DASKDMISEEKSSKDADNSLEVAGKDFA).

This chain is PWWP domain-containing protein2 (pdp2), found in Schizosaccharomyces pombe (strain 972 / ATCC 24843) (Fission yeast).